A 76-amino-acid polypeptide reads, in one-letter code: Putative defensin-like protein 184 (76 aa).

The first 21 residues, 1 to 21 (MKNSSILFVLIIVVFLISSSG), serve as a signal peptide directing secretion. Disulfide bonds link Cys-32–Cys-76, Cys-38–Cys-58, Cys-44–Cys-70, and Cys-48–Cys-72.

This sequence belongs to the DEFL family.

The protein resides in the secreted. The chain is Putative defensin-like protein 184 (LCR18) from Arabidopsis thaliana (Mouse-ear cress).